Here is a 102-residue protein sequence, read N- to C-terminus: Membrane-bound protein LytA (102 aa).

An N-terminal signal peptide occupies residues 1–16 (MKKFIALLFFILLLSG). Cys17 carries N-palmitoyl cysteine lipidation. Residue Cys17 is the site of S-diacylglycerol cysteine attachment.

The protein localises to the cell membrane. Its function is as follows. Possible role in the secretion of LytB and LytC. The sequence is that of Membrane-bound protein LytA (lytA) from Bacillus subtilis (strain 168).